A 2009-amino-acid polypeptide reads, in one-letter code: Sodium channel protein type 1 subunit alpha (2009 aa).

Topologically, residues 1–128 are cytoplasmic; it reads MEQTVLVPPG…KIAIKILVHS (128 aa). Residues 28 to 48 show a composition bias toward basic and acidic residues; it reads RIAEEKAKNPKPDKKDDDENG. A disordered region spans residues 28–60; the sequence is RIAEEKAKNPKPDKKDDDENGPKPNSDLEAGKN. An I repeat occupies 110–454; that stretch reads ILTPFNPLRK…QQMLEQLKKQ (345 aa). A helical transmembrane segment spans residues 129–146; it reads LFSMLIMCTILTNCVFMT. Over 147–152 the chain is Extracellular; that stretch reads MSNPPD. Residues 153-177 traverse the membrane as a helical segment; it reads WTKNVEYTFTGIYTFESLIKIIARG. The Cytoplasmic portion of the chain corresponds to 178–188; sequence FCLEDFTFLRD. A helical transmembrane segment spans residues 189 to 205; the sequence is PWNWLDFTVITFAYVTE. Topologically, residues 206-213 are extracellular; that stretch reads FVDLGNVS. Asn-211 is a glycosylation site (N-linked (GlcNAc...) asparagine). Residues 214–235 traverse the membrane as a helical segment; it reads ALRTFRVLRALKTISVIPGLKT. Residues 236–245 lie on the Cytoplasmic side of the membrane; the sequence is IVGALIQSVK. Residues 246 to 269 form a helical membrane-spanning segment; sequence KLSDVMILTVFCLSVFALIGLQLF. Residues 270 to 369 lie on the Extracellular side of the membrane; that stretch reads MGNLRNKCVQ…YGYTSFDTFS (100 aa). 2 cysteine pairs are disulfide-bonded: Cys-277–Cys-345 and Cys-336–Cys-351. N-linked (GlcNAc...) asparagine glycosylation is found at Asn-284, Asn-295, Asn-301, Asn-306, and Asn-338. The pore-forming intramembrane region spans 370–384; that stretch reads WAFLSLFRLMTQDFW. Residues 385–397 lie on the Extracellular side of the membrane; it reads ENLYQLTLRAAGK. A helical transmembrane segment spans residues 398-423; it reads TYMIFFVLVIFLGSFYLINLILAVVA. At 424–768 the chain is on the cytoplasmic side; the sequence is MAYEEQNQAT…HIVNLVVMDP (345 aa). The interval 458 to 528 is disordered; it reads AQQAAAATAS…EFHKSESEDS (71 aa). A Phosphoserine modification is found at Ser-470. The segment covering 479–492 has biased composition (low complexity); that stretch reads LSDSSSEASKLSSK. The span at 495-506 shows a compositional bias: basic residues; sequence KERRNRRKKRKQ. Basic and acidic residues predominate over residues 507-528; that stretch reads KEQSGGEEKDDDEFHKSESEDS. Ser-523, Ser-525, Ser-550, Ser-551, Ser-607, and Ser-730 each carry phosphoserine. The segment at 584 to 628 is disordered; that stretch reads VGSENDFADDEHSTFEDNESRRDSLFVPRRHGERRNSNLSQTSRS. Residues 593–607 show a composition bias toward basic and acidic residues; that stretch reads DEHSTFEDNESRRDS. The stretch at 750–1022 is one II repeat; that stretch reads CSPYWLKVKH…QIAVDRMHKG (273 aa). A helical membrane pass occupies residues 769 to 787; the sequence is FVDLAITICIVLNTLFMAM. The Extracellular portion of the chain corresponds to 788–797; that stretch reads EHYPMTEHFN. Residues 798-820 traverse the membrane as a helical segment; that stretch reads HVLTVGNLVFTGIFTAEMFLKII. Residues 821-830 are Cytoplasmic-facing; the sequence is AMDPYYYFQE. Residues 831-849 form a helical membrane-spanning segment; that stretch reads GWNIFDGFIVTLSLVELGL. Residues 850–854 lie on the Extracellular side of the membrane; it reads ANVEG. Residues 855-874 form a helical membrane-spanning segment; that stretch reads LSVLRSFRLLRVFKLAKSWP. At 875-891 the chain is on the cytoplasmic side; that stretch reads TLNMLIKIIGNSVGALG. The helical transmembrane segment at 892–912 threads the bilayer; it reads NLTLVLAIIVFIFAVVGMQLF. Topologically, residues 913 to 938 are extracellular; sequence GKSYKDCVCKIATDCKLPRWHMNDFF. Cys-921 and Cys-927 are oxidised to a cystine. The pore-forming intramembrane region spans 939–952; the sequence is HSFLIVFRVLCGEW. Topologically, residues 953 to 965 are extracellular; sequence IETMWDCMEVAGQ. Cys-959 and Cys-968 are disulfide-bonded. A helical membrane pass occupies residues 966–992; sequence AMCLTVFMMVMVIRNLVVLNLFLALLL. Over 993 to 1218 the chain is Cytoplasmic; it reads SSFSADNLAA…RTCFRIVEHN (226 aa). A disordered region spans residues 1129–1163; the sequence is TEDFSSESDLEESKEKLNESSSSSEGSTVDIGAPA. One copy of the III repeat lies at 1200–1514; that stretch reads RGKQWWNLRR…KKYYNAMKKL (315 aa). A helical transmembrane segment spans residues 1219-1237; it reads WFETFIVFMILLSSGALAF. Residues 1238–1250 lie on the Extracellular side of the membrane; that stretch reads EDIYIDQRKTIKT. A helical transmembrane segment spans residues 1251-1276; sequence MLEYADKVFTYIFILEMLLKWVAYGY. The Cytoplasmic portion of the chain corresponds to 1277 to 1278; the sequence is QT. A helical transmembrane segment spans residues 1279 to 1304; the sequence is YFTNAWCWLDFLIVDVSLVSLTANAL. Residues 1305-1313 lie on the Extracellular side of the membrane; it reads GYSELGAIK. The helical transmembrane segment at 1314 to 1332 threads the bilayer; that stretch reads SLRTLRALRPLRALSRFEG. Topologically, residues 1333 to 1345 are cytoplasmic; it reads MRVVVNALLGAIP. Residues 1346–1369 traverse the membrane as a helical segment; that stretch reads SIMNVLLVCLIFWLIFSIMGVNLF. Residues 1370–1415 are Extracellular-facing; that stretch reads AGKFYHCVNTTTGDTFEITEVNNHSDCLKLIERNETARWKNVKVNF. A disulfide bond links Cys-1376 and Cys-1396. Asn-1378, Asn-1392, and Asn-1403 each carry an N-linked (GlcNAc...) asparagine glycan. Residues 1416–1433 constitute an intramembrane region (pore-forming); the sequence is DNVGFGYLSLLQVATFKG. The Extracellular segment spans residues 1434 to 1457; it reads WMDIMYAAVDSRNVELQPKYEESL. Residues 1458–1483 form a helical membrane-spanning segment; sequence YMYLYFVIFIIFGSFFTLNLFIGVII. The Cytoplasmic segment spans residues 1484-1541; that stretch reads DNFNQQKKKFGGQDIFMTEEQKKYYNAMKKLGSKKPQKPIPRPGNKFQGMVFDFVTRQ. Phosphoserine; by PKC is present on Ser-1516. Residues 1523–1821 form an IV repeat; that stretch reads IPRPGNKFQG…WEKFDPDATQ (299 aa). The chain crosses the membrane as a helical span at residues 1542–1560; it reads VFDISIMILICLNMVTMMV. At 1561–1571 the chain is on the extracellular side; that stretch reads ETDDQSDYVTS. Residues 1561-1571 form an S1-S2 loop of repeat IV region; the sequence is ETDDQSDYVTS. The helical transmembrane segment at 1572 to 1593 threads the bilayer; that stretch reads ILSRINLVFIVLFTGECVLKLI. Residues 1594 to 1601 are Cytoplasmic-facing; that stretch reads SLRHYYFT. Residues 1602 to 1623 traverse the membrane as a helical segment; that stretch reads IGWNIFDFVVVILSIVGMFLAE. Positions 1619-1636 are S3b-S4 loop of repeat IV; that stretch reads MFLAELIEKYFVSPTLFR. Topologically, residues 1624-1636 are extracellular; the sequence is LIEKYFVSPTLFR. Residues 1637–1655 form a helical membrane-spanning segment; the sequence is VIRLARIGRILRLIKGAKG. Over 1656-1665 the chain is Cytoplasmic; sequence IRTLLFALMM. A helical membrane pass occupies residues 1666-1688; it reads SLPALFNIGLLLFLVMFIYAIFG. At 1689–1711 the chain is on the extracellular side; that stretch reads MSNFAYVKREVGIDDMFNFETFG. Residues 1712 to 1726 constitute an intramembrane region (pore-forming); the sequence is NSMICLFQITTSAGW. Topologically, residues 1727–1759 are extracellular; the sequence is DGLLAPILNSKPPDCDPNKVNPGSSVKGDCGNP. Cys-1741 and Cys-1756 are oxidised to a cystine. A helical transmembrane segment spans residues 1760-1788; it reads SVGIFFFVSYIIISFLVVVNMYIAVILEN. Residues 1789-2009 lie on the Cytoplasmic side of the membrane; sequence FSVATEESAE…EGKDEKAKGK (221 aa). The region spanning 1915–1944 is the IQ domain; the sequence is EEVSAVIIQRAYRRHLLKRTVKQASFTYNK. The disordered stretch occupies residues 1986–2009; sequence YDRVTKPIVEKHEQEGKDEKAKGK. Over residues 1988 to 2009 the composition is skewed to basic and acidic residues; it reads RVTKPIVEKHEQEGKDEKAKGK.

It belongs to the sodium channel (TC 1.A.1.10) family. Nav1.1/SCN1A subfamily. As to quaternary structure, the Nav1.1 voltage-gated sodium channel consists of an ion-conducting alpha subunit SCN1A which is functional on its own regulated by one or more beta-1 (SCN1B), beta-2 (SCN2B), beta-3 (SCN3B) and beta-4 (SCN4B) subunits. SCN1B and SCN3B are non-covalently associated with SCN1A. SCN2B and SCN4B are disulfide-linked to SCN1A. SCN1B regulates both the expression at the plasma membrane and the voltage dependence of Nav1.1 inactivation. SCN3B and SCN4B reduce Nav1.1 conductance. Probably interacts with TMEM233; modulates the gating properties of NaV1.1. Interacts with FGF13; regulates the steady-state inactivation of Nav.1.1. Phosphorylation at Ser-1516 by PKC in a highly conserved cytoplasmic loop slows inactivation of the sodium channel and reduces peak sodium currents.

The protein localises to the cell membrane. It carries out the reaction Na(+)(in) = Na(+)(out). Its activity is regulated as follows. Activated by the spider toxins Hm1a and Hm1b (H.maculata, AC P60992 and AC P0DOC5) eliciting acute pain and mechanical allodynia. Inhibited by the conotoxin GVIIJ. Its function is as follows. Pore-forming subunit of Nav1.1, a voltage-gated sodium (Nav) channel that directly mediates the depolarizing phase of action potentials in excitable membranes. Navs, also called VGSCs (voltage-gated sodium channels) or VDSCs (voltage-dependent sodium channels), operate by switching between closed and open conformations depending on the voltage difference across the membrane. In the open conformation they allow Na(+) ions to selectively pass through the pore, along their electrochemical gradient. The influx of Na(+) ions provokes membrane depolarization, initiating the propagation of electrical signals throughout cells and tissues. By regulating the excitability of neurons, ensures that they respond appropriately to synaptic inputs, maintaining the balance between excitation and inhibition in brain neural circuits. Nav1.1 plays a role in controlling the excitability and action potential propagation from somatosensory neurons, thereby contributing to the sensory perception of mechanically-induced pain. This is Sodium channel protein type 1 subunit alpha from Rattus norvegicus (Rat).